A 312-amino-acid polypeptide reads, in one-letter code: Polyhedral envelope protein (312 aa).

This sequence belongs to the baculoviridae PE family.

The protein resides in the virion membrane. Major component of the polyhedra envelope. The polypeptide is Polyhedral envelope protein (Lymantria dispar multicapsid nuclear polyhedrosis virus (LdMNPV)).